Reading from the N-terminus, the 695-residue chain is Exocyst complex component EXO70C2 (695 aa).

Basic and acidic residues predominate over residues 1-36; it reads MEKNDKDPDHDDKSKGDEKGDVVSDAHPSDDAHHQD. Disordered regions lie at residues 1 to 71 and 210 to 229; these read MEKN…EEAP and VVTDDSNSQRRSTADQQDHQ. Threonine 212 is subject to Phosphothreonine. Phosphoserine is present on residues serine 215 and serine 217. Threonine 446 carries the post-translational modification Phosphothreonine. Phosphoserine occurs at positions 494 and 605.

The protein belongs to the EXO70 family. As to quaternary structure, interacts with ROH1A and ROH1D independently of its phosphorylation status. In terms of processing, phosphorylation on Ser and Thr residues promotes its ability to repress pollen tube growth and to regulate cellular architecture at the pollen tube tip. Expressed in anthers, pollen and root trichoblast cells. Also observed in anther tapetum.

The protein resides in the cytoplasm. Functionally, required for optimal tip growth of pollen tube; dose-dependent negative regulator of exocyst function in pollen tube growth and cellular architecture at the pollen tube tip, probably by modulating membrane trafficking and exocytosis dynamics. The polypeptide is Exocyst complex component EXO70C2 (Arabidopsis thaliana (Mouse-ear cress)).